Reading from the N-terminus, the 448-residue chain is C4-dicarboxylate transport protein (448 aa).

The next 9 helical transmembrane spans lie at 13 to 33 (SLYA…HFYP), 49 to 69 (LIKM…IAGM), 81 to 101 (LALL…LLVV), 149 to 169 (AFAK…GFAL), 193 to 213 (IVGI…AFTI), 227 to 247 (LMGA…GIVS), 294 to 314 (VVGL…SIYL), 336 to 356 (TLLA…GSGF), and 357 to 377 (IVLA…LALI).

It belongs to the dicarboxylate/amino acid:cation symporter (DAACS) (TC 2.A.23) family.

The protein localises to the cell inner membrane. In terms of biological role, responsible for the transport of dicarboxylates such as succinate, fumarate, and malate from the periplasm across the membrane. This chain is C4-dicarboxylate transport protein, found in Albidiferax ferrireducens (strain ATCC BAA-621 / DSM 15236 / T118) (Rhodoferax ferrireducens).